The following is a 240-amino-acid chain: Zein-alpha A20 (240 aa).

The N-terminal stretch at M1–A21 is a signal peptide.

This sequence belongs to the zein family.

Its function is as follows. Zeins are major seed storage proteins. This Zea mays (Maize) protein is Zein-alpha A20.